The sequence spans 462 residues: Probable Xaa-Pro aminopeptidase pepP (462 aa).

Residues aspartate 259, aspartate 270, glutamate 393, and glutamate 433 each contribute to the Mn(2+) site.

The protein belongs to the peptidase M24B family. It depends on Mn(2+) as a cofactor.

The catalysed reaction is Release of any N-terminal amino acid, including proline, that is linked to proline, even from a dipeptide or tripeptide.. Its function is as follows. Catalyzes the removal of a penultimate prolyl residue from the N-termini of peptides. The protein is Probable Xaa-Pro aminopeptidase pepP (pepP) of Metarhizium robertsii (strain ARSEF 23 / ATCC MYA-3075) (Metarhizium anisopliae (strain ARSEF 23)).